The chain runs to 353 residues: Protein RecA (353 aa).

67 to 74 (GPESSGKT) contacts ATP.

The protein belongs to the RecA family.

The protein localises to the cytoplasm. Can catalyze the hydrolysis of ATP in the presence of single-stranded DNA, the ATP-dependent uptake of single-stranded DNA by duplex DNA, and the ATP-dependent hybridization of homologous single-stranded DNAs. It interacts with LexA causing its activation and leading to its autocatalytic cleavage. In Shewanella sediminis (strain HAW-EB3), this protein is Protein RecA.